The following is a 137-amino-acid chain: Peptide methionine sulfoxide reductase MsrB (137 aa).

The MsrB domain maps to 7-129 (VDDLKENLSE…NSASLSFTDE (123 aa)). Residues Cys-46, Cys-49, Cys-95, and Cys-98 each coordinate Zn(2+). The active-site Nucleophile is Cys-118.

Belongs to the MsrB Met sulfoxide reductase family. Requires Zn(2+) as cofactor.

It catalyses the reaction L-methionyl-[protein] + [thioredoxin]-disulfide + H2O = L-methionyl-(R)-S-oxide-[protein] + [thioredoxin]-dithiol. The chain is Peptide methionine sulfoxide reductase MsrB from Escherichia fergusonii (strain ATCC 35469 / DSM 13698 / CCUG 18766 / IAM 14443 / JCM 21226 / LMG 7866 / NBRC 102419 / NCTC 12128 / CDC 0568-73).